The sequence spans 169 residues: Lipoprotein signal peptidase (169 aa).

2 helical membrane-spanning segments follow: residues 56–76 (FLPP…VIIY) and 84–104 (QPLF…NLID). Active-site residues include Asp113 and Asp139. Residues 132–152 (WPIFNIADSAITIGACMLIIF) traverse the membrane as a helical segment.

This sequence belongs to the peptidase A8 family.

It is found in the cell inner membrane. It catalyses the reaction Release of signal peptides from bacterial membrane prolipoproteins. Hydrolyzes -Xaa-Yaa-Zaa-|-(S,diacylglyceryl)Cys-, in which Xaa is hydrophobic (preferably Leu), and Yaa (Ala or Ser) and Zaa (Gly or Ala) have small, neutral side chains.. The protein operates within protein modification; lipoprotein biosynthesis (signal peptide cleavage). This protein specifically catalyzes the removal of signal peptides from prolipoproteins. This is Lipoprotein signal peptidase from Chlorobium phaeovibrioides (strain DSM 265 / 1930) (Prosthecochloris vibrioformis (strain DSM 265)).